The primary structure comprises 301 residues: Probable enoyl-CoA hydratase 2, mitochondrial (301 aa).

Residues 1 to 32 constitute a mitochondrion transit peptide; the sequence is MSFVKYLRRDNLLQLAGKPSLSRNYILQTCRT. Substrate is bound by residues 105-109 and glycine 152; that span reads AGADL.

The protein belongs to the enoyl-CoA hydratase/isomerase family.

The protein localises to the mitochondrion. It catalyses the reaction a (3S)-3-hydroxyacyl-CoA = a (2E)-enoyl-CoA + H2O. It carries out the reaction a 4-saturated-(3S)-3-hydroxyacyl-CoA = a (3E)-enoyl-CoA + H2O. It participates in lipid metabolism; fatty acid beta-oxidation. In terms of biological role, straight-chain enoyl-CoA thioesters from C4 up to at least C16 are processed, although with decreasing catalytic rate. This chain is Probable enoyl-CoA hydratase 2, mitochondrial, found in Arabidopsis thaliana (Mouse-ear cress).